Reading from the N-terminus, the 368-residue chain is Protein ALTERED XYLOGLUCAN 9 (368 aa).

The Cytoplasmic portion of the chain corresponds to 1–32; it reads MLGAIHLGVLAACFVLFVPMAMAGWHLSRNKM. A helical transmembrane segment spans residues 33–53; sequence LFFSGALFISLAVCVHLTPYF. Over 54 to 368 the chain is Lumenal; sequence PSVSDIVASV…ALLIESHQSL (315 aa). Asparagine 99, asparagine 137, and asparagine 235 each carry an N-linked (GlcNAc...) asparagine glycan.

The protein resides in the golgi apparatus membrane. In terms of biological role, component of the plant cell wall polysaccharide acetylation pathway. Does not directly catalyze O-acetylation of xyloglucan but exhibits weak acetylesterase activity in vitro. The sequence is that of Protein ALTERED XYLOGLUCAN 9 from Arabidopsis thaliana (Mouse-ear cress).